Here is a 1107-residue protein sequence, read N- to C-terminus: DNA polymerase delta catalytic subunit (1107 aa).

The tract at residues 1-34 is disordered; it reads MDGKRRPGPGPGVPPKRARGGLWDDDDAPRPSQF. The Nuclear localization signal signature appears at 4 to 19; that stretch reads KRRPGPGPGVPPKRAR. Arginine 19 is modified (omega-N-methylarginine). Lysine 574 is covalently cross-linked (Glycyl lysine isopeptide (Lys-Gly) (interchain with G-Cter in SUMO2)). Zn(2+) contacts are provided by cysteine 1012, cysteine 1015, cysteine 1026, and cysteine 1029. A CysA-type zinc finger spans residues 1012 to 1029; that stretch reads CIGCRTVLSHQGAVCEFC. Cysteine 1058, cysteine 1061, cysteine 1071, and cysteine 1076 together coordinate [4Fe-4S] cluster. A CysB motif motif is present at residues 1058 to 1076; that stretch reads CQRCQGSLHEDVICTSRDC.

The protein belongs to the DNA polymerase type-B family. As to quaternary structure, component of the tetrameric DNA polymerase delta complex (Pol-delta4), which consists of POLD1/p125, POLD2/p50, POLD3/p66/p68 and POLD4/p12, with POLD1 bearing both DNA polymerase and 3' to 5' proofreading exonuclease activities. Within Pol-delta4, directly interacts with POLD2 and POLD4. Following genotoxic stress by DNA-damaging agents, such as ultraviolet light and methyl methanesulfonate, or by replication stress induced by treatment with hydroxyurea or aphidicolin, Pol-delta4 is converted into a trimeric form of the complex (Pol-delta3) by POLD4 degradation. Pol-delta3 is the major form at S phase replication sites and DNA damage sites. POLD1 displays different catalytic properties depending upon the complex it is found in. It exhibits higher proofreading activity and fidelity than Pol-delta4, making it particularly well suited to respond to DNA damage. Directly interacts with PCNA, as do POLD3 and POLD4; this interaction stimulates Pol-delta4 polymerase activity. As POLD2 and POLD4, directly interacts with WRNIP1; this interaction stimulates DNA polymerase delta-mediated DNA synthesis, independently of the presence of PCNA. This stimulation may be due predominantly to an increase of initiation frequency and also to increased processivity. Also observed as a dimeric complex with POLD2 (Pol-delta2 complex). Pol-delta2 is relatively insensitive to the PCNA stimulation (2-5-fold) compared to Pol-delta4 that is stimulated by over 50-fold. The DNA polymerase delta complex interacts with POLDIP2; this interaction is probably mediated through direct binding to POLD2. Interacts with CIAO1. Interacts with POLDIP2. Interacts with RFC1. [4Fe-4S] cluster is required as a cofactor. Widely expressed, with high levels of expression in heart and lung.

The protein resides in the nucleus. The enzyme catalyses DNA(n) + a 2'-deoxyribonucleoside 5'-triphosphate = DNA(n+1) + diphosphate. Regulated by alteration of quaternary structure. Exhibits burst rates of DNA synthesis are about 5 times faster in the presence of POLD4 (Pol-delta4 complex) than in its absence (Pol-delta3 complex), while the affinity of the enzyme for its DNA and dNTP substrates appears unchanged. The Pol-delta3 complex is more likely to proofread DNA synthesis because it cleaves single-stranded DNA twice as fast and transfers mismatched DNA from the polymerase to the exonuclease sites 9 times faster compared to the Pol-delta3 complex. Pol-delta3 also extends mismatched primers 3 times more slowly in the absence of POLD4. The conversion of Pol-delta4 into Pol-delta3 is induced by genotoxic stress or by replication stress leading POLD4 degradation. Stimulated in the presence of PCNA. This stimulation is further increased in the presence of KCTD13/PDIP1, most probably via direct interaction between KCTD13 and POLD2. Functionally, as the catalytic component of the trimeric (Pol-delta3 complex) and tetrameric DNA polymerase delta complexes (Pol-delta4 complex), plays a crucial role in high fidelity genome replication, including in lagging strand synthesis, and repair. Exhibits both DNA polymerase and 3'- to 5'-exonuclease activities. Requires the presence of accessory proteins POLD2, POLD3 and POLD4 for full activity. Depending upon the absence (Pol-delta3) or the presence of POLD4 (Pol-delta4), displays differences in catalytic activity. Most notably, expresses higher proofreading activity in the context of Pol-delta3 compared with that of Pol-delta4. Although both Pol-delta3 and Pol-delta4 process Okazaki fragments in vitro, Pol-delta3 may be better suited to fulfill this task, exhibiting near-absence of strand displacement activity compared to Pol-delta4 and stalling on encounter with the 5'-blocking oligonucleotides. Pol-delta3 idling process may avoid the formation of a gap, while maintaining a nick that can be readily ligated. Along with DNA polymerase kappa, DNA polymerase delta carries out approximately half of nucleotide excision repair (NER) synthesis following UV irradiation. Under conditions of DNA replication stress, in the presence of POLD3 and POLD4, may catalyze the repair of broken replication forks through break-induced replication (BIR). Involved in the translesion synthesis (TLS) of templates carrying O6-methylguanine, 8oxoG or abasic sites. In Homo sapiens (Human), this protein is DNA polymerase delta catalytic subunit.